Here is a 400-residue protein sequence, read N- to C-terminus: Enoyl-[acyl-carrier-protein] reductase [NADH] (400 aa).

NAD(+)-binding positions include 74 to 75, 111 to 112, and 139 to 140; these read FE, DA, and VA. Tyrosine 225 is a substrate binding site. Tyrosine 235 acts as the Proton donor in catalysis. NAD(+) is bound by residues lysine 244 and 273-275; that span reads VVT.

It belongs to the TER reductase family. Monomer.

It catalyses the reaction a 2,3-saturated acyl-[ACP] + NAD(+) = a (2E)-enoyl-[ACP] + NADH + H(+). It participates in lipid metabolism; fatty acid biosynthesis. Its function is as follows. Involved in the final reduction of the elongation cycle of fatty acid synthesis (FAS II). Catalyzes the reduction of a carbon-carbon double bond in an enoyl moiety that is covalently linked to an acyl carrier protein (ACP). The polypeptide is Enoyl-[acyl-carrier-protein] reductase [NADH] (Psychromonas ingrahamii (strain DSM 17664 / CCUG 51855 / 37)).